The sequence spans 453 residues: Serine incorporator 1 (453 aa).

Residue Gly2 is the site of N-myristoyl glycine attachment. The Cytoplasmic segment spans residues 2-39 (GSVLGLCSMASWIPCLCGSAPCLLCRCCPSGNNSTVTR). Residues 40–60 (LIYALFLLVGVCVACVMLIPG) traverse the membrane as a helical segment. Over 61-88 (MEEQLNKIPGFCENEKGVVPCNILVGYK) the chain is Lumenal. A helical transmembrane segment spans residues 89–109 (AVYRLCFGLAMFYLLLSLLMI). Over 110-123 (KVKSSSDPRAAVHN) the chain is Cytoplasmic. The helical transmembrane segment at 124-144 (GFWFFKFAAAIAIIIGAFFIP) threads the bilayer. Over 145–151 (EGTFTTV) the chain is Lumenal. The helical transmembrane segment at 152-172 (WFYVGMAGAFCFILIQLVLLI) threads the bilayer. Over 173 to 197 (DFAHSWNESWVEKMEEGNSRCWYAA) the chain is Cytoplasmic. The helical transmembrane segment at 198-218 (LLSATALNYLLSLVAIVLFFV) threads the bilayer. At 219-231 (YYTHPASCSENKA) the chain is on the lumenal side. Residues 232-252 (FISVNMLLCIGASVMSILPKI) form a helical membrane-spanning segment. Over 253-259 (QESQPRS) the chain is Cytoplasmic. Residues 260 to 280 (GLLQSSVITVYTMYLTWSAMT) traverse the membrane as a helical segment. Over 281–309 (NEPETNCNPSLLSIIGYNTTSTVPKEGQS) the chain is Lumenal. A helical transmembrane segment spans residues 310–330 (VQWWHAQGIIGLILFLLCVFY). Topologically, residues 331–387 (SSIRTSNNSQVNKLTLTSDESTLIEDGGARSDGSLEDGDDVHRAVDNERDGVTYSYS) are cytoplasmic. Ser351 carries the post-translational modification Phosphoserine. Phosphothreonine is present on Thr352. A phosphoserine mark is found at Ser361 and Ser364. Residues 388–408 (FFHFMLFLASLYIMMTLTNWY) form a helical membrane-spanning segment. The Lumenal portion of the chain corresponds to 409 to 426 (RYEPSREMKSQWTAVWVK). A helical membrane pass occupies residues 427 to 447 (ISSSWIGIVLYVWTLVAPLVL). Residues 448 to 453 (TNRDFD) lie on the Cytoplasmic side of the membrane.

Belongs to the TDE1 family. As to quaternary structure, interacts with SPTLC1.

The protein localises to the endoplasmic reticulum membrane. Functionally, enhances the incorporation of serine into phosphatidylserine and sphingolipids. This Pongo abelii (Sumatran orangutan) protein is Serine incorporator 1 (SERINC1).